The following is a 669-amino-acid chain: Putative transcription factor SOX-14 (669 aa).

Residues 1–12 show a composition bias toward polar residues; it reads MIAKPNQATTEP. Disordered regions lie at residues 1-149, 254-336, and 419-439; these read MIAK…EMTL, YKYR…PKYE, and SSLT…MDNI. Low complexity predominate over residues 17-37; the sequence is RPGTVPTVPATTPARPATITI. A compositionally biased stretch (pro residues) spans 52–71; the sequence is TLPPFSPSPSPASSPSPAPA. Residues 75 to 84 are compositionally biased toward polar residues; the sequence is GAQKTQSQAA. Residues 88 to 105 show a composition bias toward low complexity; sequence PAAVASPSAPVAAAAPKT. Over residues 130-145 the composition is skewed to basic and acidic residues; it reads RESEMDGERSPSHSGH. Positions 187–255 form a DNA-binding region, HMG box; the sequence is IKRPMNAFMV…LHMIEYPNYK (69 aa). Low complexity predominate over residues 284–294; sequence TTNNNNSLTTL. The segment covering 295–318 has biased composition (polar residues); the sequence is AINGTTTAGRKSKRSTSTCQSGSA. Residues 322–336 are compositionally biased toward basic and acidic residues; the sequence is LRNDSGDTSSKPKYE. The span at 419-431 shows a compositional bias: polar residues; that stretch reads SSLTQSQHNQSDP.

The protein localises to the nucleus. In Drosophila melanogaster (Fruit fly), this protein is Putative transcription factor SOX-14 (Sox14).